The following is a 342-amino-acid chain: N-acetyl-gamma-glutamyl-phosphate reductase (342 aa).

Cys146 is a catalytic residue.

The protein belongs to the NAGSA dehydrogenase family. Type 1 subfamily.

It localises to the cytoplasm. It carries out the reaction N-acetyl-L-glutamate 5-semialdehyde + phosphate + NADP(+) = N-acetyl-L-glutamyl 5-phosphate + NADPH + H(+). It functions in the pathway amino-acid biosynthesis; L-arginine biosynthesis; N(2)-acetyl-L-ornithine from L-glutamate: step 3/4. Its function is as follows. Catalyzes the NADPH-dependent reduction of N-acetyl-5-glutamyl phosphate to yield N-acetyl-L-glutamate 5-semialdehyde. This Saccharopolyspora erythraea (strain ATCC 11635 / DSM 40517 / JCM 4748 / NBRC 13426 / NCIMB 8594 / NRRL 2338) protein is N-acetyl-gamma-glutamyl-phosphate reductase.